Here is a 187-residue protein sequence, read N- to C-terminus: dTTP/UTP pyrophosphatase (187 aa).

D72 (proton acceptor) is an active-site residue.

It belongs to the Maf family. YhdE subfamily. A divalent metal cation is required as a cofactor.

It is found in the cytoplasm. It carries out the reaction dTTP + H2O = dTMP + diphosphate + H(+). It catalyses the reaction UTP + H2O = UMP + diphosphate + H(+). Functionally, nucleoside triphosphate pyrophosphatase that hydrolyzes dTTP and UTP. May have a dual role in cell division arrest and in preventing the incorporation of modified nucleotides into cellular nucleic acids. In Vibrio cholerae serotype O1 (strain ATCC 39315 / El Tor Inaba N16961), this protein is dTTP/UTP pyrophosphatase.